Here is a 143-residue protein sequence, read N- to C-terminus: MAIERTFSIVKPDAVAKNFIGQIYNRFETAGLKIVASKMIHLSQEKAEGFYAEHSERPFFGALVEFMTSGPVMVQVLEGENAVLKNREIMGATNPAEALAGTIRADLADSIDENAAHGSDALESAAREIAYFFSDDEICARTR.

Residues K11, F59, R87, T93, R104, and N114 each coordinate ATP. The active-site Pros-phosphohistidine intermediate is the H117.

The protein belongs to the NDK family. Homotetramer. Requires Mg(2+) as cofactor.

The protein resides in the cytoplasm. The catalysed reaction is a 2'-deoxyribonucleoside 5'-diphosphate + ATP = a 2'-deoxyribonucleoside 5'-triphosphate + ADP. The enzyme catalyses a ribonucleoside 5'-diphosphate + ATP = a ribonucleoside 5'-triphosphate + ADP. In terms of biological role, major role in the synthesis of nucleoside triphosphates other than ATP. The ATP gamma phosphate is transferred to the NDP beta phosphate via a ping-pong mechanism, using a phosphorylated active-site intermediate. In Colwellia psychrerythraea (strain 34H / ATCC BAA-681) (Vibrio psychroerythus), this protein is Nucleoside diphosphate kinase.